Reading from the N-terminus, the 86-residue chain is Serine protease inhibitor Kazal-type 9 (86 aa).

Residues 1–19 (MRATAIVLLLALTLATMFS) form the signal peptide. Positions 26-86 (TKQMVDCSHY…TLKFVHFGKC (61 aa)) constitute a Kazal-like domain. 3 cysteine pairs are disulfide-bonded: C32–C68, C46–C65, and C54–C86.

Dimer. Interacts with KLK5 and KLK8. Skin. Highly expressed at sites of hyperkeratosis. Also detected in thymus, tonsils, testis, pancreas, liver, placenta and brain. Expressed at stratum granulosum and stratum corneum at palmar and plantar sites (at protein level).

The protein resides in the secreted. In terms of biological role, serine protease inhibitor which specifically inhibits KLK5. May contribute to the regulation of the desquamation process in skin by inhibiting KLK5. The chain is Serine protease inhibitor Kazal-type 9 (SPINK9) from Homo sapiens (Human).